We begin with the raw amino-acid sequence, 210 residues long: Insulin receptor (210 aa).

Residues 1–96 form the Fibronectin type-III domain; it reads VSNSSSQIIL…SQILKELEES (96 aa). N-linked (GlcNAc...) asparagine glycans are attached at residues asparagine 3, asparagine 21, and asparagine 68. Residues 55–78 are disordered; it reads WSPPFESEDSQKHNQSEYEDSAGE. Positions 103-111 are insulin-binding; the sequence is EDYLHNVVF. A disordered region spans residues 116–169; it reads TSSGTGAEDPRPSRKRRSLGDVGNVTVAVPTVAAFPNTSSTSTPTSPEEHRPFE. At 133–210 the chain is on the extracellular side; that stretch reads SLGDVGNVTV…EERCSVAAYV (78 aa). Positions 137-161 are enriched in low complexity; it reads VGNVTVAVPTVAAFPNTSSTSTPTS. Residues asparagine 139 and asparagine 152 are each glycosylated (N-linked (GlcNAc...) asparagine). The cysteines at positions 195 and 204 are disulfide-linked.

This sequence belongs to the protein kinase superfamily. Tyr protein kinase family. Insulin receptor subfamily. As to quaternary structure, tetramer of 2 alpha and 2 beta chains linked by disulfide bonds. The alpha chains carry the insulin-binding regions, while the beta chains carry the kinase domain. Forms a hybrid receptor with IGF1R, the hybrid is a tetramer consisting of 1 alpha chain and 1 beta chain of INSR and 1 alpha chain and 1 beta chain of IGF1R. Interacts with SORBS1 but dissociates from it following insulin stimulation. Binds SH2B2. Activated form of INSR interacts (via phosphorylated Tyrosine) with the PTB/PID domains of IRS1 and SHC1. The sequences surrounding the phosphorylated NPXY motif contribute differentially to either IRS1 or SHC1 recognition. Interacts (via tyrosines in the C-terminus) with IRS2 (via PTB domain and 591-786 AA); the 591-786 would be the primary anchor of IRS2 to INSR while the PTB domain would have a stabilizing action on the interaction with INSR. Interacts with the SH2 domains of the 85 kDa regulatory subunit of PI3K (PIK3R1) in vitro, when autophosphorylated on tyrosine residues. Interacts with SOCS7. Interacts with SOCS3. Interacts with SOCS1. Interacts with CAV2 (tyrosine-phosphorylated form); the interaction is increased with 'Tyr-27'phosphorylation of CAV2. Interacts with ARRB2. Interacts with GRB10; this interaction blocks the association between IRS1/IRS2 and INSR, significantly reduces insulin-stimulated tyrosine phosphorylation of IRS1 and IRS2 and thus decreases insulin signaling. Interacts with GRB7. Interacts with PDPK1. Interacts with GRB14 (via BPS domain). Interacts (via subunit alpha) with ENPP1 (via 485-599 AA); this interaction blocks autophosphorylation. Interacts with PTPRE. Interacts with STAT5B (via SH2 domain). Interacts with PTPRF. Interacts with ATIC; ATIC together with PRKAA2/AMPK2 and HACD3/PTPLAD1 is proposed to be part of a signaling netwok regulating INSR autophosphorylation and endocytosis. Interacts with the insulin receptor SORL1; this interaction strongly increases its surface exposure, hence strengthens insulin signal reception. Interacts (tyrosine phosphorylated) with CCDC88A/GIV (via SH2-like region); binding requires autophosphorylation of the INSR C-terminal region. Interacts with GNAI3; the interaction is probably mediated by CCDC88A/GIV. Interacts with LMBRD1. Interacts (in response to insulin stimulation) with NCK1; this interaction may recruit PTPN1 to mediate INSR dephosphorylation. In terms of processing, after being transported from the endoplasmic reticulum to the Golgi apparatus, the single glycosylated precursor is further glycosylated and then cleaved, followed by its transport to the plasma membrane. Post-translationally, autophosphorylated on tyrosine residues in response to insulin. Dephosphorylated by PTPN1, PTPRE and PTPRF. Dephosphorylated by PTPN2; down-regulates insulin-induced signaling. S-nitrosylation by BLVRB inhibits the receptor tyrosine kinase, thereby inhibiting insulin signaling.

It is found in the cell membrane. Its subcellular location is the late endosome. The protein resides in the lysosome. It carries out the reaction L-tyrosyl-[protein] + ATP = O-phospho-L-tyrosyl-[protein] + ADP + H(+). Activated in response to insulin. Autophosphorylation activates the kinase activity. PTPN1, PTPRE and PTPRF dephosphorylate important tyrosine residues, thereby reducing INSR activity. Inhibited by ENPP1. GRB10 and GRB14 inhibit the catalytic activity of the INSR, they block access of substrates to the activated receptor. SOCS1 and SOCS3 act as negative regulators of INSR activity, they bind to the activated INRS and interfere with the phosphorylation of INSR substrates. Functionally, receptor tyrosine kinase which mediates the pleiotropic actions of insulin. Binding of insulin leads to phosphorylation of several intracellular substrates, including, insulin receptor substrates (IRS1, 2, 3, 4), SHC, GAB1, CBL and other signaling intermediates. Each of these phosphorylated proteins serve as docking proteins for other signaling proteins that contain Src-homology-2 domains (SH2 domain) that specifically recognize different phosphotyrosine residues, including the p85 regulatory subunit of PI3K and SHP2. Phosphorylation of IRSs proteins lead to the activation of two main signaling pathways: the PI3K-AKT/PKB pathway, which is responsible for most of the metabolic actions of insulin, and the Ras-MAPK pathway, which regulates expression of some genes and cooperates with the PI3K pathway to control cell growth and differentiation. Binding of the SH2 domains of PI3K to phosphotyrosines on IRS1 leads to the activation of PI3K and the generation of phosphatidylinositol-(3, 4, 5)-triphosphate (PIP3), a lipid second messenger, which activates several PIP3-dependent serine/threonine kinases, such as PDPK1 and subsequently AKT/PKB. The net effect of this pathway is to produce a translocation of the glucose transporter SLC2A4/GLUT4 from cytoplasmic vesicles to the cell membrane to facilitate glucose transport. Moreover, upon insulin stimulation, activated AKT/PKB is responsible for: anti-apoptotic effect of insulin by inducing phosphorylation of BAD; regulates the expression of gluconeogenic and lipogenic enzymes by controlling the activity of the winged helix or forkhead (FOX) class of transcription factors. Another pathway regulated by PI3K-AKT/PKB activation is mTORC1 signaling pathway which regulates cell growth and metabolism and integrates signals from insulin. AKT mediates insulin-stimulated protein synthesis by phosphorylating TSC2 thereby activating mTORC1 pathway. The Ras/RAF/MAP2K/MAPK pathway is mainly involved in mediating cell growth, survival and cellular differentiation of insulin. Phosphorylated IRS1 recruits GRB2/SOS complex, which triggers the activation of the Ras/RAF/MAP2K/MAPK pathway. In addition to binding insulin, the insulin receptor can bind insulin-like growth factors (IGFI and IGFII). When present in a hybrid receptor with IGF1R, binds IGF1. In adipocytes, inhibits lipolysis. The sequence is that of Insulin receptor (INSR) from Macaca mulatta (Rhesus macaque).